Reading from the N-terminus, the 375-residue chain is Formate dehydrogenase (375 aa).

Positions 94 and 120 each coordinate substrate. Residues 175 to 176 (RI), aspartate 196, 231 to 235 (PLHEK), threonine 257, aspartate 283, 312 to 315 (HMSG), and serine 358 contribute to the NAD(+) site.

Belongs to the D-isomer specific 2-hydroxyacid dehydrogenase family. FDH subfamily. As to quaternary structure, homodimer.

Its subcellular location is the cytoplasm. The catalysed reaction is formate + NAD(+) = CO2 + NADH. Functionally, catalyzes the NAD(+)-dependent oxidation of formate to carbon dioxide. Formate oxidation is the final step in the methanol oxidation pathway in methylotrophic microorganisms. Has a role in the detoxification of exogenous formate in non-methylotrophic organisms. In Neurospora crassa (strain ATCC 24698 / 74-OR23-1A / CBS 708.71 / DSM 1257 / FGSC 987), this protein is Formate dehydrogenase.